The sequence spans 443 residues: Xaa-Pro dipeptidase (443 aa).

Residues aspartate 246, aspartate 257, histidine 339, glutamate 384, and glutamate 423 each coordinate Mn(2+).

Belongs to the peptidase M24B family. Bacterial-type prolidase subfamily. It depends on Mn(2+) as a cofactor.

It catalyses the reaction Xaa-L-Pro dipeptide + H2O = an L-alpha-amino acid + L-proline. Functionally, splits dipeptides with a prolyl residue in the C-terminal position. The chain is Xaa-Pro dipeptidase from Shigella boydii serotype 18 (strain CDC 3083-94 / BS512).